A 472-amino-acid chain; its full sequence is Eukaryotic translation initiation factor 2 subunit 3, Y-linked (472 aa).

Alanine 2 is modified (N-acetylalanine). Serine 16 carries the post-translational modification Phosphoserine. The tr-type G domain maps to 39–247 (QATINIGTIG…YIVKKIPVPL (209 aa)). The segment at 48-55 (GHVAHGKS) is G1. A GTP-binding site is contributed by 51–56 (AHGKST). A G2 region spans residues 76-80 (NITIK). The segment at 134–137 (DCPG) is G3. Residues 190–193 (NKID) and 225–227 (SAQ) contribute to the GTP site. The interval 190–193 (NKID) is G4. Residues 225 to 227 (SAQ) are G5.

This sequence belongs to the TRAFAC class translation factor GTPase superfamily. Classic translation factor GTPase family. EIF2G subfamily. In terms of assembly, eIF2 is a heterotrimer composed of an alpha (EIF2S1), a beta (EIF2S2) and a gamma (Eif2s3x and Eif2s3y) chain. eIF2 is member of the 43S pre-initiation complex (43S PIC). In terms of tissue distribution, widely expressed in males.

It catalyses the reaction GTP + H2O = GDP + phosphate + H(+). In terms of biological role, member of the eIF2 complex that functions in the early steps of protein synthesis by forming a ternary complex with GTP and initiator tRNA. This complex binds to a 40S ribosomal subunit, followed by mRNA binding to form the 43S pre-initiation complex (43S PIC). Junction of the 60S ribosomal subunit to form the 80S initiation complex is preceded by hydrolysis of the GTP bound to eIF2 and release of an eIF2-GDP binary complex. In order for eIF2 to recycle and catalyze another round of initiation, the GDP bound to eIF2 must exchange with GTP by way of a reaction catalyzed by eIF-2B. Along with its paralog on chromosome X, may contribute to spermatogenesis up to the round spermatid stage. The polypeptide is Eukaryotic translation initiation factor 2 subunit 3, Y-linked (Eif2s3y) (Rattus norvegicus (Rat)).